Here is a 313-residue protein sequence, read N- to C-terminus: Acetyl-coenzyme A carboxylase carboxyl transferase subunit alpha (313 aa).

The 262-residue stretch at 30–291 (DLDREISDLE…KMALLQELAF (262 aa)) folds into the CoA carboxyltransferase C-terminal domain.

Belongs to the AccA family. As to quaternary structure, acetyl-CoA carboxylase is a heterohexamer composed of biotin carboxyl carrier protein (AccB), biotin carboxylase (AccC) and two subunits each of ACCase subunit alpha (AccA) and ACCase subunit beta (AccD).

Its subcellular location is the cytoplasm. It catalyses the reaction N(6)-carboxybiotinyl-L-lysyl-[protein] + acetyl-CoA = N(6)-biotinyl-L-lysyl-[protein] + malonyl-CoA. It functions in the pathway lipid metabolism; malonyl-CoA biosynthesis; malonyl-CoA from acetyl-CoA: step 1/1. In terms of biological role, component of the acetyl coenzyme A carboxylase (ACC) complex. First, biotin carboxylase catalyzes the carboxylation of biotin on its carrier protein (BCCP) and then the CO(2) group is transferred by the carboxyltransferase to acetyl-CoA to form malonyl-CoA. This Zymomonas mobilis subsp. mobilis (strain ATCC 31821 / ZM4 / CP4) protein is Acetyl-coenzyme A carboxylase carboxyl transferase subunit alpha.